Consider the following 394-residue polypeptide: NAC domain-containing protein 26 (394 aa).

Residues 7–156 enclose the NAC domain; the sequence is VPPGFRFHPT…GWVVCRVFKK (150 aa). Residues 107–162 mediate DNA binding; it reads IGMRKTLVFYKGRAPNGQKSDWIMHEYRLETSENGTPQEEGWVVCRVFKKKLAATV.

It belongs to the plant vascular related NAC-domain protein family. As to quaternary structure, interacts with NAC083/VNI2. In terms of tissue distribution, detected in root vessels of protoxylems, outermost metaxylems, inner metaxylems, shoots and hypocotyls. Expressed in roots, hypocotyls, cotyledons and leaves. Expressed in developing xylems. Specifically expressed in vessels in the secondary xylem of the root-hypocotyl region, and in vessels but not in interfascicular fibers in stems.

It is found in the nucleus. Its function is as follows. Transcription activator that binds to the secondary wall NAC binding element (SNBE), 5'-(T/A)NN(C/T)(T/C/G)TNNNNNNNA(A/C)GN(A/C/T)(A/T)-3', in the promoter of target genes. Involved in xylem formation by promoting the expression of secondary wall-associated transcription factors and of genes involved in secondary wall biosynthesis and programmed cell death, genes driven by the secondary wall NAC binding element (SNBE). Triggers thickening of secondary walls. In Arabidopsis thaliana (Mouse-ear cress), this protein is NAC domain-containing protein 26.